Reading from the N-terminus, the 611-residue chain is Dihydroxy-acid dehydratase (611 aa).

A Mg(2+)-binding site is contributed by Asp81. Cys122 lines the [2Fe-2S] cluster pocket. Residues Asp123 and Lys124 each coordinate Mg(2+). At Lys124 the chain carries N6-carboxylysine. Cys195 lines the [2Fe-2S] cluster pocket. Glu491 is a binding site for Mg(2+). Ser517 (proton acceptor) is an active-site residue.

The protein belongs to the IlvD/Edd family. Homodimer. Requires [2Fe-2S] cluster as cofactor. The cofactor is Mg(2+).

The enzyme catalyses (2R)-2,3-dihydroxy-3-methylbutanoate = 3-methyl-2-oxobutanoate + H2O. The catalysed reaction is (2R,3R)-2,3-dihydroxy-3-methylpentanoate = (S)-3-methyl-2-oxopentanoate + H2O. Its pathway is amino-acid biosynthesis; L-isoleucine biosynthesis; L-isoleucine from 2-oxobutanoate: step 3/4. It functions in the pathway amino-acid biosynthesis; L-valine biosynthesis; L-valine from pyruvate: step 3/4. Functionally, functions in the biosynthesis of branched-chain amino acids. Catalyzes the dehydration of (2R,3R)-2,3-dihydroxy-3-methylpentanoate (2,3-dihydroxy-3-methylvalerate) into 2-oxo-3-methylpentanoate (2-oxo-3-methylvalerate) and of (2R)-2,3-dihydroxy-3-methylbutanoate (2,3-dihydroxyisovalerate) into 2-oxo-3-methylbutanoate (2-oxoisovalerate), the penultimate precursor to L-isoleucine and L-valine, respectively. The chain is Dihydroxy-acid dehydratase from Allorhizobium ampelinum (strain ATCC BAA-846 / DSM 112012 / S4) (Agrobacterium vitis (strain S4)).